The sequence spans 623 residues: E3 ubiquitin-protein ligase DTX1 (623 aa).

WWE domains lie at 13–93 and 94–170; these read HNFG…PVRR and NFFE…RLRR. Positions 224 to 319 are disordered; it reads KVPSGPPPAL…RASIPPGVPA (96 aa). A compositionally biased stretch (pro residues) spans 227–242; that stretch reads SGPPPALPPPPPPPIH. Over residues 292-311 the composition is skewed to polar residues; sequence GQNNLNRPGEQRTSGSSSRA. Residues 413 to 474 form an RING-type zinc finger; that stretch reads CTICMERLVT…DGSLQCPTCK (62 aa).

The protein belongs to the Deltex family. In terms of assembly, may form a homo- or heterodimer with other members of the Deltex family. Probably interacts with Notch1. As to expression, specifically expressed in regions undergoing neuronal differentiation. Mainly colocalizes with Notch1.

It catalyses the reaction S-ubiquitinyl-[E2 ubiquitin-conjugating enzyme]-L-cysteine + [acceptor protein]-L-lysine = [E2 ubiquitin-conjugating enzyme]-L-cysteine + N(6)-ubiquitinyl-[acceptor protein]-L-lysine.. Its pathway is protein modification; protein ubiquitination. Regulator of Notch signaling, a signaling pathway involved in cell-cell communications that regulates a broad spectrum of cell-fate determinations. Probably acts both as a positive and negative regulator of Notch, depending on the developmental and cell context. Functions as a ubiquitin ligase protein in vivo, mediating ubiquitination and promoting degradation of MEKK1, suggesting that it may regulate the Notch pathway via some ubiquitin ligase activity. The protein is E3 ubiquitin-protein ligase DTX1 (dtx1) of Xenopus laevis (African clawed frog).